Reading from the N-terminus, the 233-residue chain is Uracil-DNA glycosylase (233 aa).

The active-site Proton acceptor is the D70.

This sequence belongs to the uracil-DNA glycosylase (UDG) superfamily. UNG family.

The protein resides in the cytoplasm. The catalysed reaction is Hydrolyzes single-stranded DNA or mismatched double-stranded DNA and polynucleotides, releasing free uracil.. Its function is as follows. Excises uracil residues from the DNA which can arise as a result of misincorporation of dUMP residues by DNA polymerase or due to deamination of cytosine. The sequence is that of Uracil-DNA glycosylase from Helicobacter pylori (strain Shi470).